A 250-amino-acid chain; its full sequence is 5-oxoprolinase subunit A 2 (250 aa).

This sequence belongs to the LamB/PxpA family. As to quaternary structure, forms a complex composed of PxpA, PxpB and PxpC.

The enzyme catalyses 5-oxo-L-proline + ATP + 2 H2O = L-glutamate + ADP + phosphate + H(+). Functionally, catalyzes the cleavage of 5-oxoproline to form L-glutamate coupled to the hydrolysis of ATP to ADP and inorganic phosphate. In Bordetella bronchiseptica (strain ATCC BAA-588 / NCTC 13252 / RB50) (Alcaligenes bronchisepticus), this protein is 5-oxoprolinase subunit A 2.